The following is a 119-amino-acid chain: Large ribosomal subunit protein bL20c (119 aa).

This sequence belongs to the bacterial ribosomal protein bL20 family.

Its subcellular location is the plastid. The protein localises to the chloroplast. Its function is as follows. Binds directly to 23S ribosomal RNA and is necessary for the in vitro assembly process of the 50S ribosomal subunit. It is not involved in the protein synthesizing functions of that subunit. In Saccharum officinarum (Sugarcane), this protein is Large ribosomal subunit protein bL20c.